We begin with the raw amino-acid sequence, 226 residues long: NAD(P)H-hydrate epimerase (226 aa).

A YjeF N-terminal domain is found at 10-215 (AIELDLDLFE…ALQRKYQLNL (206 aa)). 58-62 (NNGGD) provides a ligand contact to (6S)-NADPHX. 2 residues coordinate K(+): Asn59 and Asp123. (6S)-NADPHX-binding positions include 127–133 (GFGFKPP) and Asp156. Ser159 contributes to the K(+) binding site.

This sequence belongs to the NnrE/AIBP family. Requires K(+) as cofactor.

It carries out the reaction (6R)-NADHX = (6S)-NADHX. The catalysed reaction is (6R)-NADPHX = (6S)-NADPHX. Catalyzes the epimerization of the S- and R-forms of NAD(P)HX, a damaged form of NAD(P)H that is a result of enzymatic or heat-dependent hydration. This is a prerequisite for the S-specific NAD(P)H-hydrate dehydratase to allow the repair of both epimers of NAD(P)HX. The chain is NAD(P)H-hydrate epimerase from Drosophila persimilis (Fruit fly).